A 124-amino-acid chain; its full sequence is Large ribosomal subunit protein bL12 (124 aa).

The protein belongs to the bacterial ribosomal protein bL12 family. As to quaternary structure, homodimer. Part of the ribosomal stalk of the 50S ribosomal subunit. Forms a multimeric L10(L12)X complex, where L10 forms an elongated spine to which 2 to 4 L12 dimers bind in a sequential fashion. Binds GTP-bound translation factors.

In terms of biological role, forms part of the ribosomal stalk which helps the ribosome interact with GTP-bound translation factors. Is thus essential for accurate translation. The protein is Large ribosomal subunit protein bL12 of Pelodictyon phaeoclathratiforme (strain DSM 5477 / BU-1).